We begin with the raw amino-acid sequence, 1941 residues long: Integrin beta-like protein B (1941 aa).

Positions 1-20 (MKNIIKYLFIFLCFLIITEA) are cleaved as a signal peptide. The Extracellular segment spans residues 21 to 1871 (THFRYGTISW…VTTQNSSNKT (1851 aa)). An EGF-like domain is found at 420–457 (YGDKCTVLPPCKNGVPNGGVNGDGKCLCNNGWTGSDCS). Cystine bridges form between Cys-430–Cys-445 and Cys-447–Cys-456. In terms of domain architecture, VWFA spans 513–696 (DVYLLVDANM…AGIKAVSSKL (184 aa)). Residues Asn-1400, Asn-1505, Asn-1530, Asn-1606, Asn-1652, Asn-1738, Asn-1777, Asn-1848, Asn-1866, and Asn-1869 are each glycosylated (N-linked (GlcNAc...) asparagine). Residues 1872–1892 (VLSGAIAGAAAGTALIAAAMW) form a helical membrane-spanning segment. Topologically, residues 1893-1941 (KMLRKAAPPTDAFFDEGAFLGDGVNSNPMYQESKNGGENPLYLASNETL) are cytoplasmic. The tract at residues 1921–1941 (MYQESKNGGENPLYLASNETL) is disordered.

Belongs to the SIB family. As to quaternary structure, interacts with talA/talin.

The protein localises to the membrane. Functionally, implicated in cellular adhesion. The polypeptide is Integrin beta-like protein B (sibB) (Dictyostelium discoideum (Social amoeba)).